We begin with the raw amino-acid sequence, 471 residues long: Glutamate--tRNA ligase (471 aa).

Residues 9-19 (PSPTGYLHVGG) carry the 'HIGH' region motif. Zn(2+)-binding residues include Cys98, Cys100, Cys125, and His127. The short motif at 237–241 (KLSKR) is the 'KMSKS' region element. Lys240 provides a ligand contact to ATP.

This sequence belongs to the class-I aminoacyl-tRNA synthetase family. Glutamate--tRNA ligase type 1 subfamily. Monomer. The cofactor is Zn(2+).

The protein resides in the cytoplasm. It catalyses the reaction tRNA(Glu) + L-glutamate + ATP = L-glutamyl-tRNA(Glu) + AMP + diphosphate. Catalyzes the attachment of glutamate to tRNA(Glu) in a two-step reaction: glutamate is first activated by ATP to form Glu-AMP and then transferred to the acceptor end of tRNA(Glu). This is Glutamate--tRNA ligase from Cronobacter sakazakii (strain ATCC BAA-894) (Enterobacter sakazakii).